Consider the following 331-residue polypeptide: ATP-dependent 6-phosphofructokinase (331 aa).

Gly12 lines the ATP pocket. ADP is bound by residues 22-26 (RGVVR) and 55-60 (RYSVSD). ATP-binding positions include 73–74 (RF) and 103–106 (GDGS). Asp104 serves as a coordination point for Mg(2+). 127–129 (TID) contacts substrate. Asp129 functions as the Proton acceptor in the catalytic mechanism. Arg156 serves as a coordination point for ADP. Substrate is bound by residues Arg164 and 171-173 (MGR). ADP contacts are provided by residues 187–189 (GCE), Lys213, and 215–217 (KKH). Residues Glu224, Arg245, and 251 to 254 (HIQR) each bind substrate.

It belongs to the phosphofructokinase type A (PFKA) family. ATP-dependent PFK group I subfamily. Prokaryotic clade 'B1' sub-subfamily. Homotetramer. Mg(2+) serves as cofactor.

Its subcellular location is the cytoplasm. It carries out the reaction beta-D-fructose 6-phosphate + ATP = beta-D-fructose 1,6-bisphosphate + ADP + H(+). Its pathway is carbohydrate degradation; glycolysis; D-glyceraldehyde 3-phosphate and glycerone phosphate from D-glucose: step 3/4. Allosterically activated by ADP and other diphosphonucleosides, and allosterically inhibited by phosphoenolpyruvate. In terms of biological role, catalyzes the phosphorylation of D-fructose 6-phosphate to fructose 1,6-bisphosphate by ATP, the first committing step of glycolysis. In Yersinia enterocolitica serotype O:8 / biotype 1B (strain NCTC 13174 / 8081), this protein is ATP-dependent 6-phosphofructokinase.